A 426-amino-acid chain; its full sequence is Phosphomethylpyrimidine synthase (426 aa).

Substrate is bound by residues Asn66, Met95, Tyr124, His163, 185 to 187 (SRG), 226 to 229 (DGLR), and Glu265. His269 is a Zn(2+) binding site. A substrate-binding site is contributed by Tyr292. Zn(2+) is bound at residue His333. Positions 407, 410, and 414 each coordinate [4Fe-4S] cluster.

The protein belongs to the ThiC family. [4Fe-4S] cluster serves as cofactor.

The catalysed reaction is 5-amino-1-(5-phospho-beta-D-ribosyl)imidazole + S-adenosyl-L-methionine = 4-amino-2-methyl-5-(phosphooxymethyl)pyrimidine + CO + 5'-deoxyadenosine + formate + L-methionine + 3 H(+). The protein operates within cofactor biosynthesis; thiamine diphosphate biosynthesis. Functionally, catalyzes the synthesis of the hydroxymethylpyrimidine phosphate (HMP-P) moiety of thiamine from aminoimidazole ribotide (AIR) in a radical S-adenosyl-L-methionine (SAM)-dependent reaction. This is Phosphomethylpyrimidine synthase from Thermococcus gammatolerans (strain DSM 15229 / JCM 11827 / EJ3).